The following is a 644-amino-acid chain: 2-isopropylmalate synthase (644 aa).

The segment at Met-1–Ser-40 is disordered. Polar residues predominate over residues Pro-31–Ser-40. Residues Pro-72–Asp-346 form the Pyruvate carboxyltransferase domain. The Mg(2+) site is built by Asp-81, His-285, His-287, and Asn-321. The segment at Pro-491 to Arg-644 is regulatory domain. One copy of the VNTR1 repeat lies at Val-575 to Pro-593. The tract at residues Ala-581 to Pro-612 is disordered. A VNTR2 repeat occupies Val-594–Pro-612.

Belongs to the alpha-IPM synthase/homocitrate synthase family. LeuA type 2 subfamily. Homodimer. Mg(2+) is required as a cofactor.

The protein localises to the cytoplasm. It carries out the reaction 3-methyl-2-oxobutanoate + acetyl-CoA + H2O = (2S)-2-isopropylmalate + CoA + H(+). It participates in amino-acid biosynthesis; L-leucine biosynthesis; L-leucine from 3-methyl-2-oxobutanoate: step 1/4. In terms of biological role, catalyzes the condensation of the acetyl group of acetyl-CoA with 3-methyl-2-oxobutanoate (2-ketoisovalerate) to form 3-carboxy-3-hydroxy-4-methylpentanoate (2-isopropylmalate). The protein is 2-isopropylmalate synthase of Mycobacterium tuberculosis (strain CDC 1551 / Oshkosh).